Here is a 286-residue protein sequence, read N- to C-terminus: Bifunctional protein FolD (286 aa).

Residues 165 to 167, Ser-190, and Val-231 each bind NADP(+); that span reads GRS.

This sequence belongs to the tetrahydrofolate dehydrogenase/cyclohydrolase family. Homodimer.

The enzyme catalyses (6R)-5,10-methylene-5,6,7,8-tetrahydrofolate + NADP(+) = (6R)-5,10-methenyltetrahydrofolate + NADPH. It catalyses the reaction (6R)-5,10-methenyltetrahydrofolate + H2O = (6R)-10-formyltetrahydrofolate + H(+). The protein operates within one-carbon metabolism; tetrahydrofolate interconversion. Catalyzes the oxidation of 5,10-methylenetetrahydrofolate to 5,10-methenyltetrahydrofolate and then the hydrolysis of 5,10-methenyltetrahydrofolate to 10-formyltetrahydrofolate. This is Bifunctional protein FolD from Bacillus cereus (strain AH187).